A 262-amino-acid polypeptide reads, in one-letter code: Phosphatidylglycerol--prolipoprotein diacylglyceryl transferase (262 aa).

A run of 4 helical transmembrane segments spans residues 9–29, 41–61, 80–100, and 109–129; these read LGPL…ILAV, IIPD…ILGA, IFAI…GALV, and LINT…AQSL. Arg-131 serves as a coordination point for a 1,2-diacyl-sn-glycero-3-phospho-(1'-sn-glycerol). Helical transmembrane passes span 167–187, 197–217, and 226–246; these read QPTF…ILIF, GHIT…IEGM, and GFRV…MIVI.

This sequence belongs to the Lgt family.

It localises to the cell membrane. It carries out the reaction L-cysteinyl-[prolipoprotein] + a 1,2-diacyl-sn-glycero-3-phospho-(1'-sn-glycerol) = an S-1,2-diacyl-sn-glyceryl-L-cysteinyl-[prolipoprotein] + sn-glycerol 1-phosphate + H(+). The protein operates within protein modification; lipoprotein biosynthesis (diacylglyceryl transfer). Functionally, catalyzes the transfer of the diacylglyceryl group from phosphatidylglycerol to the sulfhydryl group of the N-terminal cysteine of a prolipoprotein, the first step in the formation of mature lipoproteins. This is Phosphatidylglycerol--prolipoprotein diacylglyceryl transferase from Streptococcus pneumoniae serotype 4 (strain ATCC BAA-334 / TIGR4).